Here is a 448-residue protein sequence, read N- to C-terminus: 3-phosphoshikimate 1-carboxyvinyltransferase (448 aa).

Residues lysine 28, serine 29, and arginine 33 each coordinate 3-phosphoshikimate. Lysine 28 lines the phosphoenolpyruvate pocket. 2 residues coordinate phosphoenolpyruvate: glycine 100 and arginine 128. 4 residues coordinate 3-phosphoshikimate: serine 173, glutamine 175, aspartate 326, and lysine 353. Glutamine 175 contacts phosphoenolpyruvate. Aspartate 326 serves as the catalytic Proton acceptor. Phosphoenolpyruvate is bound by residues arginine 357 and arginine 405.

The protein belongs to the EPSP synthase family. In terms of assembly, monomer.

The protein resides in the cytoplasm. The catalysed reaction is 3-phosphoshikimate + phosphoenolpyruvate = 5-O-(1-carboxyvinyl)-3-phosphoshikimate + phosphate. Its pathway is metabolic intermediate biosynthesis; chorismate biosynthesis; chorismate from D-erythrose 4-phosphate and phosphoenolpyruvate: step 6/7. Functionally, catalyzes the transfer of the enolpyruvyl moiety of phosphoenolpyruvate (PEP) to the 5-hydroxyl of shikimate-3-phosphate (S3P) to produce enolpyruvyl shikimate-3-phosphate and inorganic phosphate. This chain is 3-phosphoshikimate 1-carboxyvinyltransferase, found in Sinorhizobium fredii (strain NBRC 101917 / NGR234).